The following is a 177-amino-acid chain: Outer membrane lipoprotein Blc (177 aa).

A signal peptide spans 1–18; it reads MRILPVVAAVTAAFLVVA. Cysteine 19 carries N-palmitoyl cysteine lipidation. Cysteine 19 carries the S-diacylglycerol cysteine lipid modification.

It belongs to the calycin superfamily. Lipocalin family. Homodimer.

The protein localises to the cell outer membrane. In terms of biological role, involved in the storage or transport of lipids necessary for membrane maintenance under stressful conditions. Displays a binding preference for lysophospholipids. This chain is Outer membrane lipoprotein Blc, found in Citrobacter freundii.